Here is a 364-residue protein sequence, read N- to C-terminus: S-adenosylmethionine:tRNA ribosyltransferase-isomerase (364 aa).

It belongs to the QueA family. In terms of assembly, monomer.

Its subcellular location is the cytoplasm. The enzyme catalyses 7-aminomethyl-7-carbaguanosine(34) in tRNA + S-adenosyl-L-methionine = epoxyqueuosine(34) in tRNA + adenine + L-methionine + 2 H(+). The protein operates within tRNA modification; tRNA-queuosine biosynthesis. In terms of biological role, transfers and isomerizes the ribose moiety from AdoMet to the 7-aminomethyl group of 7-deazaguanine (preQ1-tRNA) to give epoxyqueuosine (oQ-tRNA). This chain is S-adenosylmethionine:tRNA ribosyltransferase-isomerase, found in Lachnoclostridium phytofermentans (strain ATCC 700394 / DSM 18823 / ISDg) (Clostridium phytofermentans).